Here is a 263-residue protein sequence, read N- to C-terminus: Probable HTH-type transcriptional regulator ArcR (263 aa).

Residues 14–74 (ITSVLNAVEI…DGDGTYQLGD (61 aa)) enclose the HTH iclR-type domain. Residues 35–54 (LQELTTELDLTKATIHTYMA) constitute a DNA-binding region (H-T-H motif). The IclR-ED domain occupies 89–262 (LYRLGREEID…ANIIEVRLET (174 aa)).

In terms of biological role, probably regulates transcription of the arcABC operon. This Halobacterium salinarum (strain ATCC 29341 / DSM 671 / R1) protein is Probable HTH-type transcriptional regulator ArcR (arcR).